Here is a 188-residue protein sequence, read N- to C-terminus: Elongation factor P (188 aa).

The residue at position 34 (lysine 34) is an N6-(3,6-diaminohexanoyl)-5-hydroxylysine.

It belongs to the elongation factor P family. May be beta-lysylated on the epsilon-amino group of Lys-34 by the combined action of EpmA and EpmB, and then hydroxylated on the C5 position of the same residue by EpmC (if this protein is present). Lysylation is critical for the stimulatory effect of EF-P on peptide-bond formation. The lysylation moiety may extend toward the peptidyltransferase center and stabilize the terminal 3-CCA end of the tRNA. Hydroxylation of the C5 position on Lys-34 may allow additional potential stabilizing hydrogen-bond interactions with the P-tRNA.

The protein resides in the cytoplasm. It participates in protein biosynthesis; polypeptide chain elongation. Involved in peptide bond synthesis. Alleviates ribosome stalling that occurs when 3 or more consecutive Pro residues or the sequence PPG is present in a protein, possibly by augmenting the peptidyl transferase activity of the ribosome. Modification of Lys-34 is required for alleviation. The polypeptide is Elongation factor P (Photorhabdus laumondii subsp. laumondii (strain DSM 15139 / CIP 105565 / TT01) (Photorhabdus luminescens subsp. laumondii)).